The following is an 863-amino-acid chain: Receptor-like protein Cf-9 (863 aa).

Residues 1–21 (MDCVKLVFLMLYTFLCQLALS) form the signal peptide. At 22–812 (SSLPHLCPED…EEDSPMISWQ (791 aa)) the chain is on the extracellular side. Residues 24 to 91 (LPHLCPEDQA…GVHCDETTGQ (68 aa)) form an N-cap region. N-linked (GlcNAc...) asparagine glycosylation is found at asparagine 48, asparagine 72, asparagine 109, asparagine 127, asparagine 142, asparagine 191, asparagine 204, and asparagine 212. The LRR 1; degenerate repeat unit spans residues 92-115 (VIALDLRCSQLQGKFHSNSSLFQL). LRR repeat units follow at residues 116-139 (SNLK…KFGE) and 141-164 (SNLT…ICHL). The stretch at 165–191 (SKLHVLRICDQYGLSLVPYNFELLLKN) is one LRR 4; degenerate repeat. LRR repeat units lie at residues 192–214 (LTQL…SNFS), 215–238 (SHLT…VFHL), 241–263 (LQSL…KWNS), 265–287 (ASLM…SFSH), 288–312 (LTSL…LWNL), 314–335 (NIVF…FTIF), 336–358 (EKLK…LSFN), 359–382 (TQLE…ISGL), 383–406 (QNLE…IFSL), 408–428 (SLVE…EFKS), 429–452 (KTLS…LLNQ), 454–476 (NLQL…ICNL), 477–500 (KTLI…VVER), 502–524 (EYLS…TFSV), 525–549 (GNIL…MINC), 551–572 (YLTL…WLGY), 573–597 (LFQL…GNTN), 599–623 (FMGL…ILGN), 667–690 (LDSN…IIGD), 691–714 (LVGL…SFQN), 715–739 (LSVL…LASL), and 741–759 (FLEV…IPKG). Asparagine 262 is a glycosylation site (N-linked (GlcNAc...) asparagine). Residues asparagine 300 and asparagine 311 are each glycosylated (N-linked (GlcNAc...) asparagine). N-linked (GlcNAc...) asparagine glycans are attached at residues asparagine 378, asparagine 396, and asparagine 416. Residue asparagine 464 is glycosylated (N-linked (GlcNAc...) asparagine). Asparagine 519 is a glycosylation site (N-linked (GlcNAc...) asparagine). A glycan (N-linked (GlcNAc...) asparagine) is linked at asparagine 563. 2 N-linked (GlcNAc...) asparagine glycosylation sites follow: asparagine 698 and asparagine 714. Residues asparagine 746 and asparagine 767 are each glycosylated (N-linked (GlcNAc...) asparagine). A C-cap/acidic domain region spans residues 760–812 (KQFDSFGNTSYQGNDGLRGFPLSKLCGGEDQVTTPAELDQEEEEEDSPMISWQ). The chain crosses the membrane as a helical span at residues 813–833 (GVLVGYGCGLVIGLSVIYIMW). Residues 834–863 (STQYPAWFSRMDLKLEHIITTKMKKHKKRY) are Cytoplasmic-facing.

It belongs to the RLP family. In terms of assembly, interacts with thioredoxin-like protein CITRX.

The protein localises to the cell membrane. Involved in plant defense. Confers resistance to the fungal pathogen C.fulvum through recognition of the AVR9 elicitor protein. This chain is Receptor-like protein Cf-9, found in Solanum pimpinellifolium (Currant tomato).